Here is a 588-residue protein sequence, read N- to C-terminus: Dual specificity tyrosine-phosphorylation-regulated kinase 3 (588 aa).

Residues 1-188 (MGGTARGPGR…HGVIGGPNNG (188 aa)) form a disordered region. The segment covering 97-134 (SNTIQSDGISDSEKCSPTVSQGKSSDCLNTVKSNSSSK) has biased composition (polar residues). Residues 209–522 (YEVLKIIGKG…PAQALRHPWI (314 aa)) form the Protein kinase domain. ATP-binding positions include 215-223 (IGKGSFGQV), Lys-238, and 288-291 (FELL). Asp-335 functions as the Proton acceptor in the catalytic mechanism. Ser-350 bears the Phosphoserine mark. At Tyr-369 the chain carries Phosphotyrosine. Positions 468–481 (RSRRGKKRGPPGSK) match the Nuclear localization signal motif.

It belongs to the protein kinase superfamily. CMGC Ser/Thr protein kinase family. MNB/DYRK subfamily. Interacts with SIRT1. It depends on Mg(2+) as a cofactor. Post-translationally, ubiquitinated at anaphase by the anaphase-promoting complex (APC/C), leading to its degradation by the proteasome. Protein kinase activity is activated following autophosphorylation at Tyr-369. Autophosphorylation at Ser-350 stabilizes the protein and enhances the protein kinase activity. As to expression, isoform 1: Highly expressed in testis and in hematopoietic tissue such as fetal liver, and bone marrow. Isoform 1: Predominant form in fetal liver and bone marrow. Isoform 1: Present at low levels in heart, pancreas, lymph node and thymus. Isoform 2: Highly expressed in testis and in hematopoietic tissue such as fetal liver, and bone marrow. Isoform 2: Predominant form in testis. Isoform 2: Present at low levels in heart, pancreas, lymph node and thymus.

The protein resides in the nucleus. It is found in the cytoplasm. Its subcellular location is the nucleus speckle. It localises to the cytoplasmic granule. The protein localises to the cytoskeleton. The protein resides in the microtubule organizing center. It is found in the centrosome. It catalyses the reaction L-seryl-[protein] + ATP = O-phospho-L-seryl-[protein] + ADP + H(+). The catalysed reaction is L-threonyl-[protein] + ATP = O-phospho-L-threonyl-[protein] + ADP + H(+). It carries out the reaction L-tyrosyl-[protein] + ATP = O-phospho-L-tyrosyl-[protein] + ADP + H(+). Protein kinase activity is activated following autophosphorylation at Tyr-369. Inhibited by harmine, an ATP competitive inhibitor. Inhibited by small-compound GSK-626616. In terms of biological role, dual-specificity protein kinase that promotes disassembly of several types of membraneless organelles during mitosis, such as stress granules, nuclear speckles and pericentriolar material. Dual-specificity tyrosine-regulated kinases (DYRKs) autophosphorylate a critical tyrosine residue in their activation loop and phosphorylate their substrate on serine and threonine residues. Acts as a central dissolvase of membraneless organelles during the G2-to-M transition, after the nuclear-envelope breakdown: acts by mediating phosphorylation of multiple serine and threonine residues in unstructured domains of proteins, such as SRRM1 and PCM1. Does not mediate disassembly of all membraneless organelles: disassembly of P-body and nucleolus is not regulated by DYRK3. Dissolution of membraneless organelles at the onset of mitosis is also required to release mitotic regulators, such as ZNF207, from liquid-unmixed organelles where they are sequestered and keep them dissolved during mitosis. Regulates mTORC1 by mediating the dissolution of stress granules: during stressful conditions, DYRK3 partitions from the cytosol to the stress granule, together with mTORC1 components, which prevents mTORC1 signaling. When stress signals are gone, the kinase activity of DYRK3 is required for the dissolution of stress granule and mTORC1 relocation to the cytosol: acts by mediating the phosphorylation of the mTORC1 inhibitor AKT1S1, allowing full reactivation of mTORC1 signaling. Also acts as a negative regulator of EPO-dependent erythropoiesis: may place an upper limit on red cell production during stress erythropoiesis. Inhibits cell death due to cytokine withdrawal in hematopoietic progenitor cells. Promotes cell survival upon genotoxic stress through phosphorylation of SIRT1: this in turn inhibits p53/TP53 activity and apoptosis. The sequence is that of Dual specificity tyrosine-phosphorylation-regulated kinase 3 from Homo sapiens (Human).